We begin with the raw amino-acid sequence, 245 residues long: 1-(5-phosphoribosyl)-5-[(5-phosphoribosylamino)methylideneamino] imidazole-4-carboxamide isomerase (245 aa).

Residue Asp-11 is the Proton acceptor of the active site. The active-site Proton donor is Asp-132.

It belongs to the HisA/HisF family.

The protein resides in the cytoplasm. The enzyme catalyses 1-(5-phospho-beta-D-ribosyl)-5-[(5-phospho-beta-D-ribosylamino)methylideneamino]imidazole-4-carboxamide = 5-[(5-phospho-1-deoxy-D-ribulos-1-ylimino)methylamino]-1-(5-phospho-beta-D-ribosyl)imidazole-4-carboxamide. It functions in the pathway amino-acid biosynthesis; L-histidine biosynthesis; L-histidine from 5-phospho-alpha-D-ribose 1-diphosphate: step 4/9. The protein is 1-(5-phosphoribosyl)-5-[(5-phosphoribosylamino)methylideneamino] imidazole-4-carboxamide isomerase of Bacillus velezensis (strain DSM 23117 / BGSC 10A6 / LMG 26770 / FZB42) (Bacillus amyloliquefaciens subsp. plantarum).